A 330-amino-acid chain; its full sequence is uncharacterized protein (330 aa).

Residues 2 to 22 (IKPIYLIIIGTVICLVILYYF) form a helical membrane-spanning segment. N-linked (GlcNAc...) asparagine; by host glycans are attached at residues asparagine 72, asparagine 94, asparagine 234, and asparagine 315.

The protein resides in the membrane. This is an uncharacterized protein from Acanthamoeba polyphaga mimivirus (APMV).